The following is a 470-amino-acid chain: FAD-dependent monooxygenase dpchE (470 aa).

The signal sequence occupies residues 1–24; sequence MSEPHFKVIIVGGSITGLTLAHSL. FAD-binding residues include E35, G49, and R108. An N-linked (GlcNAc...) asparagine glycan is attached at N128. R193 is a catalytic residue. Positions 312 and 325 each coordinate FAD. Residues 447-463 form a helical membrane-spanning segment; that stretch reads WAVVSRSVLLLVGLAIL.

The protein belongs to the paxM FAD-dependent monooxygenase family. Requires FAD as cofactor.

It is found in the membrane. The protein operates within secondary metabolite biosynthesis; terpenoid biosynthesis. In terms of biological role, FAD-dependent monooxygenase; part of the gene cluster that mediates the biosynthesis of the diterpenoid pyrones higginsianins A and B. The first step of the pathway is the synthesis of the alpha-pyrone moiety by the polyketide synthase dpchA via condensation of one acetyl-CoA starter unit with 3 malonyl-CoA units and 2 methylations. The alpha-pyrone is then combined with geranylgeranyl pyrophosphate (GGPP) formed by the GGPP synthase dpchD through the action of the prenyltransferase dpchC to yield a linear alpha-pyrone diterpenoid. Subsequent steps in the diterpenoid pyrone biosynthetic pathway involve the decalin core formation, which is initiated by the epoxidation of the C10-C11 olefin by the FAD-dependent oxidoreductase dpchE, and is followed by a cyclization cascade catalyzed by the terpene cyclase dpchB. The short chain dehydrogenase/reductase dpchG then oxidizes the 8S hydroxy group to a ketone and the short chain dehydrogenase/reductase dpchH reduces the ketone to the 8R hydroxy group to yield higginsianin B. Finally, the FAD-dependent oxidoreductase dpchF converts higginsianin B into higginsianin A. In Colletotrichum higginsianum (strain IMI 349063) (Crucifer anthracnose fungus), this protein is FAD-dependent monooxygenase dpchE.